Reading from the N-terminus, the 157-residue chain is S-ribosylhomocysteine lyase (157 aa).

3 residues coordinate Fe cation: histidine 54, histidine 58, and cysteine 126.

It belongs to the LuxS family. As to quaternary structure, homodimer. It depends on Fe cation as a cofactor.

The catalysed reaction is S-(5-deoxy-D-ribos-5-yl)-L-homocysteine = (S)-4,5-dihydroxypentane-2,3-dione + L-homocysteine. Involved in the synthesis of autoinducer 2 (AI-2) which is secreted by bacteria and is used to communicate both the cell density and the metabolic potential of the environment. The regulation of gene expression in response to changes in cell density is called quorum sensing. Catalyzes the transformation of S-ribosylhomocysteine (RHC) to homocysteine (HC) and 4,5-dihydroxy-2,3-pentadione (DPD). The sequence is that of S-ribosylhomocysteine lyase from Bacillus pumilus (strain SAFR-032).